Here is a 146-residue protein sequence, read N- to C-terminus: Large ribosomal subunit protein uL15 (146 aa).

A disordered region spans residues 1-46 (MKLHELQPAPGSRKKAVRVGRGIGSGNGKTAGRGHKGQKARSGGGV). Residues 21 to 31 (RGIGSGNGKTA) are compositionally biased toward gly residues.

This sequence belongs to the universal ribosomal protein uL15 family. As to quaternary structure, part of the 50S ribosomal subunit.

Binds to the 23S rRNA. This is Large ribosomal subunit protein uL15 from Geobacillus thermodenitrificans (strain NG80-2).